The sequence spans 330 residues: Aspartate--ammonia ligase (330 aa).

It belongs to the class-II aminoacyl-tRNA synthetase family. AsnA subfamily.

The protein localises to the cytoplasm. The enzyme catalyses L-aspartate + NH4(+) + ATP = L-asparagine + AMP + diphosphate + H(+). Its pathway is amino-acid biosynthesis; L-asparagine biosynthesis; L-asparagine from L-aspartate (ammonia route): step 1/1. The polypeptide is Aspartate--ammonia ligase (Streptococcus pneumoniae serotype 2 (strain D39 / NCTC 7466)).